A 151-amino-acid polypeptide reads, in one-letter code: Large ribosomal subunit protein uL13 (151 aa).

The interval Y126–R151 is disordered. Over residues H131–K140 the composition is skewed to basic and acidic residues.

Belongs to the universal ribosomal protein uL13 family. Part of the 50S ribosomal subunit.

This protein is one of the early assembly proteins of the 50S ribosomal subunit, although it is not seen to bind rRNA by itself. It is important during the early stages of 50S assembly. This chain is Large ribosomal subunit protein uL13, found in Trichodesmium erythraeum (strain IMS101).